The primary structure comprises 401 residues: Argininosuccinate synthase (401 aa).

Ala10–Ser18 lines the ATP pocket. Tyr89 contributes to the L-citrulline binding site. Residue Gly119 participates in ATP binding. L-aspartate contacts are provided by Thr121, Asn125, and Asp126. Asn125 contacts L-citrulline. Residues Arg129, Ser177, Ser186, Glu262, and Tyr274 each coordinate L-citrulline.

The protein belongs to the argininosuccinate synthase family. Type 1 subfamily. In terms of assembly, homotetramer.

The protein localises to the cytoplasm. It catalyses the reaction L-citrulline + L-aspartate + ATP = 2-(N(omega)-L-arginino)succinate + AMP + diphosphate + H(+). It functions in the pathway amino-acid biosynthesis; L-arginine biosynthesis; L-arginine from L-ornithine and carbamoyl phosphate: step 2/3. The chain is Argininosuccinate synthase from Thermosynechococcus vestitus (strain NIES-2133 / IAM M-273 / BP-1).